The chain runs to 439 residues: 3beta-hydroxysteroid-dehydrogenase/decarboxylase isoform 1 (439 aa).

Position 16–21 (16–21 (GGRGFA)) interacts with NAD(+). 2 N-linked (GlcNAc...) asparagine glycosylation sites follow: Asn75 and Asn158. Tyr161 and Lys165 together coordinate NAD(+). The Proton donor role is filled by Lys165. N-linked (GlcNAc...) asparagine glycosylation is present at Asn327. The Reticulon; atypical domain maps to 371–439 (VTETIQWKKQ…MKVFGSKKID (69 aa)). 2 helical membrane passes run 381–401 (TLIA…TTGS) and 405–425 (IITA…INGI).

Belongs to the 3-beta-HSD family.

It localises to the endoplasmic reticulum membrane. The catalysed reaction is a 3beta-hydroxysteroid-4alpha-carboxylate + NAD(+) = a 3-oxosteroid + CO2 + NADH. It catalyses the reaction 4alpha-carboxy-4beta,14alpha-dimethyl-9beta,19-cyclo-5alpha-ergost-24(24(1))-en-3beta-ol + NAD(+) = cycloeucalenone + CO2 + NADH. The protein operates within steroid biosynthesis; zymosterol biosynthesis; zymosterol from lanosterol: step 4/6. In terms of biological role, 3beta-hydroxysteroid-dehydrogenase/decarboxylase involved in sterol synthesis. Catalyzes the formation of 3-oxosteroids from 3beta-hydroxysteroids-4alpha-carboxylate. Involved in the regulation of inflorescence internodes and leaves growth, probably by affecting auxin transporter activity possibly by altering sterol composition in the membranes. The chain is 3beta-hydroxysteroid-dehydrogenase/decarboxylase isoform 1 from Arabidopsis thaliana (Mouse-ear cress).